The sequence spans 123 residues: Ribosome-binding factor A (123 aa).

It belongs to the RbfA family. Monomer. Binds 30S ribosomal subunits, but not 50S ribosomal subunits or 70S ribosomes.

Its subcellular location is the cytoplasm. Functionally, one of several proteins that assist in the late maturation steps of the functional core of the 30S ribosomal subunit. Associates with free 30S ribosomal subunits (but not with 30S subunits that are part of 70S ribosomes or polysomes). Required for efficient processing of 16S rRNA. May interact with the 5'-terminal helix region of 16S rRNA. The protein is Ribosome-binding factor A of Legionella pneumophila (strain Paris).